Here is a 389-residue protein sequence, read N- to C-terminus: Cytochrome b (389 aa).

4 helical membrane passes run M36–M56, W80–A102, V117–C137, and F183–M203. The heme b site is built by H86 and H100. Heme b contacts are provided by H187 and H201. H206 lines the a ubiquinone pocket. The next 4 helical transmembrane spans lie at F229–F249, L293–D313, L325–M345, and F352–P372.

It belongs to the cytochrome b family. As to quaternary structure, fungal cytochrome b-c1 complex contains 10 subunits; 3 respiratory subunits, 2 core proteins and 5 low-molecular weight proteins. Cytochrome b-c1 complex is a homodimer. Requires heme b as cofactor.

The protein resides in the mitochondrion inner membrane. Functionally, component of the ubiquinol-cytochrome c reductase complex (complex III or cytochrome b-c1 complex) that is part of the mitochondrial respiratory chain. The b-c1 complex mediates electron transfer from ubiquinol to cytochrome c. Contributes to the generation of a proton gradient across the mitochondrial membrane that is then used for ATP synthesis. This is Cytochrome b (COB) from Vanderwaltozyma polyspora (strain ATCC 22028 / DSM 70294 / BCRC 21397 / CBS 2163 / NBRC 10782 / NRRL Y-8283 / UCD 57-17) (Kluyveromyces polysporus).